The following is a 358-amino-acid chain: CCAAT/enhancer-binding protein alpha (358 aa).

Positions 1–55 (MESADFYEAEPRPPMSSHLQSPPHAPSSAAFGFPRGAGPAQPPAPPAAPEPLGGI) are disordered. The tract at residues 1-70 (MESADFYEAE…SIDISAYIDP (70 aa)) is required to repress E2F1:TFDP1-mediated transcription, to inhibit cell cycle and to induce adipocyte differentiation. Residues 29–39 (AAFGFPRGAGP) show a composition bias toward low complexity. Pro residues predominate over residues 40–49 (AQPPAPPAAP). The interval 54–72 (GICEHETSIDISAYIDPAA) is required for interaction with TRIB1. A required to induce adipocyte differentiation region spans residues 128-204 (PPGYGCAAAG…HPPPAHLAAP (77 aa)). K161 is modified (N6-acetyllysine; alternate). K161 participates in a covalent cross-link: Glycyl lysine isopeptide (Lys-Gly) (interchain with G-Cter in SUMO2); alternate. 2 disordered regions span residues 178-201 (LFPYQPPPPPPPSHPHPHPPPAHL) and 217-291 (TMHL…RRER). Composition is skewed to pro residues over residues 181–199 (YQPPPPPPPSHPHPHPPPA) and 224–238 (HPTPPPTPVPSPHPA). The segment at 182 to 198 (QPPPPPPPSHPHPHPPP) is required to functionally cooperate with SREBF1 in promoter activation. A Phosphoserine modification is found at S190. 2 positions are modified to phosphothreonine; by GSK3: T226 and T230. Residue S234 is modified to Phosphoserine; by GSK3. A compositionally biased stretch (low complexity) spans 239-259 (PALGAAGLPGPGSALKGLGAA). Residues 244-358 (AGLPGPGSAL…SLVKAMGNCA (115 aa)) form an interaction with FOXO1 region. Residues 276–291 (KSVDKNSNEYRVRRER) show a composition bias toward basic and acidic residues. The bZIP domain occupies 282-345 (SNEYRVRRER…DTLRGIFRQL (64 aa)). A DNA-binding region spans residues 285-300 (YRVRRERNNIAVRKSR). The segment at 286-313 (RVRRERNNIAVRKSRDKAKQRNVETQQK) is basic motif. A leucine-zipper region spans residues 317–345 (LTSDNDRLRKRVEQLSRELDTLRGIFRQL).

The protein belongs to the bZIP family. C/EBP subfamily. Binds DNA as a homodimer and as a heterodimer. Can form stable heterodimers with CEBPB, CEBPD, CEBPE and CEBPG. Interacts with PRDM16. Interacts with UBN1. Interacts with ZNF638; this interaction increases transcriptional activation. Interacts with the complex TFDP2:E2F1; the interaction prevents CEBPA binding to target gene promoters and represses its transcriptional activity. Interacts with RB1. Interacts (when phosphorylated at Ser-190) with CDK2, CDK4, E2F4 and SMARCA2. Interacts with SREBPF1. Interacts with FOXO1 (via the Fork-head domain); the interaction increases when FOXO1 is deacetylated. Interacts with SIX1. Interacts (via recognition sequence) with TRIB1. Interacts (via bZIP domain) with OVOL2 (via zinc-finger domains); the interaction inhibits the transcription factor activity of CEBPA and is required to repress adipogenesis. In terms of assembly, interacts with TAF1A and UBTF. As to quaternary structure, interacts with TAF1A and UBTF. Interacts with NPM1. (Microbial infection) Interacts with HBV protein X. In terms of assembly, (Microbial infection) Interacts with Epstein-Barr virus lytic switch protein BZLF1; this interaction induces G1 cell cycle arrest. Phosphorylation at Ser-190 is required for interaction with CDK2, CDK4 and SWI/SNF complex leading to cell cycle inhibition. Dephosphorylated at Ser-190 by protein phosphatase 2A (PP2A) through PI3K/AKT signaling pathway regulation. Phosphorylation at Thr-226 and Thr-230 by GSK3 is constitutive in adipose tissue and lung. In liver, both Thr-226 and Thr-230 are phosphorylated only during feeding but not during fasting. Phosphorylation of the GSK3 consensus sites selectively decreases transactivation activity on IRE-controlled promoters. Post-translationally, sumoylated, sumoylation blocks the inhibitory effect on cell proliferation by disrupting the interaction with SMARCA2. In terms of processing, ubiquitinated by COP1 upon interaction with TRIB1.

Its subcellular location is the nucleus. The protein resides in the nucleolus. Its function is as follows. Transcription factor that coordinates proliferation arrest and the differentiation of myeloid progenitors, adipocytes, hepatocytes, and cells of the lung and the placenta. Binds directly to the consensus DNA sequence 5'-T[TG]NNGNAA[TG]-3' acting as an activator on distinct target genes. During early embryogenesis, plays essential and redundant functions with CEBPB. Essential for the transition from common myeloid progenitors (CMP) to granulocyte/monocyte progenitors (GMP). Critical for the proper development of the liver and the lung. Necessary for terminal adipocyte differentiation, is required for postnatal maintenance of systemic energy homeostasis and lipid storage. To regulate these different processes at the proper moment and tissue, interplays with other transcription factors and modulators. Down-regulates the expression of genes that maintain cells in an undifferentiated and proliferative state through E2F1 repression, which is critical for its ability to induce adipocyte and granulocyte terminal differentiation. Reciprocally E2F1 blocks adipocyte differentiation by binding to specific promoters and repressing CEBPA binding to its target gene promoters. Proliferation arrest also depends on a functional binding to SWI/SNF complex. In liver, regulates gluconeogenesis and lipogenesis through different mechanisms. To regulate gluconeogenesis, functionally cooperates with FOXO1 binding to IRE-controlled promoters and regulating the expression of target genes such as PCK1 or G6PC1. To modulate lipogenesis, interacts and transcriptionally synergizes with SREBF1 in promoter activation of specific lipogenic target genes such as ACAS2. In adipose tissue, seems to act as FOXO1 coactivator accessing to ADIPOQ promoter through FOXO1 binding sites. Functionally, can act as dominant-negative. Binds DNA and have transctivation activity, even if much less efficiently than isoform 2. Does not inhibit cell proliferation. In terms of biological role, directly and specifically enhances ribosomal DNA transcription interacting with RNA polymerase I-specific cofactors and inducing histone acetylation. This Homo sapiens (Human) protein is CCAAT/enhancer-binding protein alpha.